Reading from the N-terminus, the 487-residue chain is Malonate-semialdehyde dehydrogenase (487 aa).

NAD(+)-binding residues include Ala-150, Phe-152, Lys-176, Glu-179, Arg-180, Ser-229, and Thr-251. Cys-284 acts as the Nucleophile in catalysis. Glu-382 serves as a coordination point for NAD(+).

This sequence belongs to the aldehyde dehydrogenase family. IolA subfamily. Homotetramer.

It catalyses the reaction 3-oxopropanoate + NAD(+) + CoA + H2O = hydrogencarbonate + acetyl-CoA + NADH + H(+). The catalysed reaction is 2-methyl-3-oxopropanoate + NAD(+) + CoA + H2O = propanoyl-CoA + hydrogencarbonate + NADH + H(+). Its pathway is polyol metabolism; myo-inositol degradation into acetyl-CoA; acetyl-CoA from myo-inositol: step 7/7. In terms of biological role, catalyzes the oxidation of malonate semialdehyde (MSA) and methylmalonate semialdehyde (MMSA) into acetyl-CoA and propanoyl-CoA, respectively. Is involved in a myo-inositol catabolic pathway. Bicarbonate, and not CO2, is the end-product of the enzymatic reaction. The sequence is that of Malonate-semialdehyde dehydrogenase from Bacillus velezensis (strain DSM 23117 / BGSC 10A6 / LMG 26770 / FZB42) (Bacillus amyloliquefaciens subsp. plantarum).